The chain runs to 160 residues: Cytochrome c-type biogenesis protein CcmE (160 aa).

Over 1–8 (MSAPRKTR) the chain is Cytoplasmic. The helical; Signal-anchor for type II membrane protein transmembrane segment at 9-29 (LYAILAVVCGAVLTIALMLYA) threads the bilayer. Over 30-160 (LSSNIDLFYT…PAAGPEGKRL (131 aa)) the chain is Periplasmic. Positions 130 and 134 each coordinate heme.

The protein belongs to the CcmE/CycJ family.

It is found in the cell inner membrane. Heme chaperone required for the biogenesis of c-type cytochromes. Transiently binds heme delivered by CcmC and transfers the heme to apo-cytochromes in a process facilitated by CcmF and CcmH. In Pectobacterium atrosepticum (strain SCRI 1043 / ATCC BAA-672) (Erwinia carotovora subsp. atroseptica), this protein is Cytochrome c-type biogenesis protein CcmE.